Consider the following 153-residue polypeptide: Endoribonuclease YbeY (153 aa).

The Zn(2+) site is built by His114, His118, and His124.

The protein belongs to the endoribonuclease YbeY family. Zn(2+) is required as a cofactor.

Its subcellular location is the cytoplasm. In terms of biological role, single strand-specific metallo-endoribonuclease involved in late-stage 70S ribosome quality control and in maturation of the 3' terminus of the 16S rRNA. The sequence is that of Endoribonuclease YbeY from Shewanella sp. (strain MR-7).